The sequence spans 431 residues: U-box domain-containing protein 20 (431 aa).

The U-box domain maps to 32-106; sequence TIPSQFQCPI…QGWCGSSLGG (75 aa).

It catalyses the reaction S-ubiquitinyl-[E2 ubiquitin-conjugating enzyme]-L-cysteine + [acceptor protein]-L-lysine = [E2 ubiquitin-conjugating enzyme]-L-cysteine + N(6)-ubiquitinyl-[acceptor protein]-L-lysine.. The protein operates within protein modification; protein ubiquitination. Functions as an E3 ubiquitin ligase. This chain is U-box domain-containing protein 20 (PUB20), found in Arabidopsis thaliana (Mouse-ear cress).